We begin with the raw amino-acid sequence, 93 residues long: Putative hemolysin E-like protein (93 aa).

It belongs to the hemolysin E family.

This is Putative hemolysin E-like protein from Escherichia coli O6:H1 (strain CFT073 / ATCC 700928 / UPEC).